A 436-amino-acid chain; its full sequence is Ribulose bisphosphate carboxylase large chain (436 aa).

Residues N104 and T154 each contribute to the substrate site. K156 functions as the Proton acceptor in the catalytic mechanism. K158 contributes to the substrate binding site. Residues K182, D184, and E185 each coordinate Mg(2+). An N6-carboxylysine modification is found at K182. H275 functions as the Proton acceptor in the catalytic mechanism. Residues R276, H308, and S360 each coordinate substrate.

This sequence belongs to the RuBisCO large chain family. Type I subfamily. In terms of assembly, heterohexadecamer of 8 large chains and 8 small chains; disulfide-linked. The disulfide link is formed within the large subunit homodimers. The cofactor is Mg(2+). The disulfide bond which can form in the large chain dimeric partners within the hexadecamer appears to be associated with oxidative stress and protein turnover.

It localises to the plastid. The protein resides in the chloroplast. It catalyses the reaction 2 (2R)-3-phosphoglycerate + 2 H(+) = D-ribulose 1,5-bisphosphate + CO2 + H2O. The enzyme catalyses D-ribulose 1,5-bisphosphate + O2 = 2-phosphoglycolate + (2R)-3-phosphoglycerate + 2 H(+). In terms of biological role, ruBisCO catalyzes two reactions: the carboxylation of D-ribulose 1,5-bisphosphate, the primary event in carbon dioxide fixation, as well as the oxidative fragmentation of the pentose substrate in the photorespiration process. Both reactions occur simultaneously and in competition at the same active site. The protein is Ribulose bisphosphate carboxylase large chain of Euglena geniculata.